A 300-amino-acid polypeptide reads, in one-letter code: UDP-N-acetylenolpyruvoylglucosamine reductase (300 aa).

An FAD-binding PCMH-type domain is found at 29–193 (TGGPADLLVF…LSATFKLRSG (165 aa)). Residue R172 is part of the active site. Catalysis depends on S222, which acts as the Proton donor. E292 is an active-site residue.

This sequence belongs to the MurB family. Requires FAD as cofactor.

The protein localises to the cytoplasm. It carries out the reaction UDP-N-acetyl-alpha-D-muramate + NADP(+) = UDP-N-acetyl-3-O-(1-carboxyvinyl)-alpha-D-glucosamine + NADPH + H(+). Its pathway is cell wall biogenesis; peptidoglycan biosynthesis. In terms of biological role, cell wall formation. This is UDP-N-acetylenolpyruvoylglucosamine reductase from Pediococcus pentosaceus (strain ATCC 25745 / CCUG 21536 / LMG 10740 / 183-1w).